Consider the following 1354-residue polypeptide: Rho-associated protein kinase 1 (1354 aa).

Ser2 carries the N-acetylserine modification. One can recognise a Protein kinase domain in the interval 76–338 (YEVVKVIGRG…VEEIKRHLFF (263 aa)). ATP is bound by residues 82–90 (IGRGAFGEV) and Lys105. Catalysis depends on Asp198, which acts as the Proton acceptor. In terms of domain architecture, AGC-kinase C-terminal spans 341 to 409 (DQWAWETLRD…YSNRRYLPSA (69 aa)). Positions 368-727 (FDDLEEDKGD…KKLKEEREAR (360 aa)) are interaction with FHOD1. The stretch at 422–692 (KSLQESLQKT…RLEQEVNEHK (271 aa)) forms a coiled coil. In terms of domain architecture, REM-1 spans 479-556 (SAVSQIEKEK…LEEANDLLRT (78 aa)). The tract at residues 707-946 (EAKSVAMCEM…TVSRLEETNS (240 aa)) is SHROOM3 binding. The RhoBD domain maps to 949-1015 (TKDIEMLRKE…LAEIMNRKDF (67 aa)). Residues 998–1010 (LKTQAVNKLAEIM) are RHOA binding. A coiled-coil region spans residues 1011 to 1102 (NRKDFKIDRK…KLLDLSDSTS (92 aa)). Phosphoserine occurs at positions 1105 and 1108. Positions 1115-1354 (NLPESRIEGW…VVKNTSGKTS (240 aa)) are auto-inhibitory. In terms of domain architecture, PH spans 1118-1317 (ESRIEGWLSV…WVTHLVKKIP (200 aa)). The Phorbol-ester/DAG-type zinc finger occupies 1228–1283 (GHEFIPTLYHFPANCEACAKPLWHVFKPPPALECRRCHVKCHRDHLDKKEDLISPC). At Ser1328 the chain carries Phosphoserine. The interval 1333–1354 (STRSTANQSFRKVVKNTSGKTS) is disordered.

This sequence belongs to the protein kinase superfamily. AGC Ser/Thr protein kinase family. Homodimer. Interacts with RHOA (activated by GTP), RHOB, RHOC, GEM, MYLC2B, RHOE, PPP1R12A, LIMK1, LIMK2, TSG101, CHORDC1, DAPK3, PFN1 and JIP3. Interacts with FHOD1 in a Src-dependent manner. Interacts with PTEN. Interacts with ITGB1BP1 (via N-terminus and PTB domain). Interacts with SHROOM3. It depends on Mg(2+) as a cofactor. Autophosphorylated on serine and threonine residues. Post-translationally, cleaved by caspase-3 during apoptosis. This leads to constitutive activation of the kinase and membrane blebbing. As to expression, highly expressed in brain, heart, lung, liver, stomach, spleen, kidney, testis, muscle, embryo and placenta.

The protein localises to the cytoplasm. It is found in the cytoskeleton. The protein resides in the microtubule organizing center. Its subcellular location is the centrosome. It localises to the centriole. The protein localises to the golgi apparatus membrane. It is found in the cell projection. The protein resides in the bleb. Its subcellular location is the cell membrane. It localises to the lamellipodium. The protein localises to the ruffle. It catalyses the reaction L-seryl-[protein] + ATP = O-phospho-L-seryl-[protein] + ADP + H(+). It carries out the reaction L-threonyl-[protein] + ATP = O-phospho-L-threonyl-[protein] + ADP + H(+). Its activity is regulated as follows. Activated by RHOA binding. Inhibited by Y-27632. Its function is as follows. Protein kinase which is a key regulator of the actin cytoskeleton and cell polarity. Involved in regulation of smooth muscle contraction, actin cytoskeleton organization, stress fiber and focal adhesion formation, neurite retraction, cell adhesion and motility via phosphorylation of DAPK3, GFAP, LIMK1, LIMK2, MYL9/MLC2, TPPP, PFN1 and PPP1R12A. Phosphorylates FHOD1 and acts synergistically with it to promote SRC-dependent non-apoptotic plasma membrane blebbing. Phosphorylates JIP3 and regulates the recruitment of JNK to JIP3 upon UVB-induced stress. Acts as a suppressor of inflammatory cell migration by regulating PTEN phosphorylation and stability. Acts as a negative regulator of VEGF-induced angiogenic endothelial cell activation. Required for centrosome positioning and centrosome-dependent exit from mitosis. Plays a role in terminal erythroid differentiation. Inhibits podocyte motility via regulation of actin cytoskeletal dynamics and phosphorylation of CFL1. Promotes keratinocyte terminal differentiation. Involved in osteoblast compaction through the fibronectin fibrillogenesis cell-mediated matrix assembly process, essential for osteoblast mineralization. May regulate closure of the eyelids and ventral body wall by inducing the assembly of actomyosin bundles. The protein is Rho-associated protein kinase 1 (Rock1) of Mus musculus (Mouse).